We begin with the raw amino-acid sequence, 390 residues long: Transforming growth factor beta-1 proprotein (390 aa).

An N-terminal signal peptide occupies residues 1-29; the sequence is MPPSGLRLLPLLLPLPWLLVLTPGRPAAG. A straightjacket domain region spans residues 30-74; the sequence is LSTCKTIDMELVKRKRIEAIRGQILSKLRLASPPSQGEVPPGPLP. Positions 75–271 are arm domain; it reads EAVLALYNST…ATPLERAQHL (197 aa). Asn82, Asn136, and Asn176 each carry an N-linked (GlcNAc...) asparagine glycan. The segment at 226–252 is bowtie tail; that stretch reads DSKDNVLHVEINGISPKRRGDLGTIHD. The short motif at 244–246 is the Cell attachment site element; it reads RGD. Cystine bridges form between Cys285–Cys294, Cys293–Cys356, Cys322–Cys387, and Cys326–Cys389.

Belongs to the TGF-beta family. As to quaternary structure, homodimer; disulfide-linked. Interacts with the serine proteases, HTRA1 and HTRA3: the interaction with either inhibits TGFB1-mediated signaling and the HTRA protease activity is required for this inhibition. May interact with THSD4; this interaction may lead to sequestration by FBN1 microfibril assembly and attenuation of TGFB signaling. Interacts with CD109, DPT and ASPN. Interacts with EFEMP2. Interacts with TSKU; the interaction contributes to regulation of the hair cycle. Interacts with TGFBR3. In terms of assembly, homodimer; disulfide-linked. Interacts with transforming growth factor beta-1 (TGF-beta-1) chain; interaction is non-covalent and maintains TGF-beta-1 in a latent state; each latency-associated peptide (LAP) monomer interacts with TGF-beta-1 in the other monomer. Interacts with LTBP1; leading to regulation of TGF-beta-1 activation. Interacts with LRRC32/GARP; leading to regulation of TGF-beta-1 activation on the surface of activated regulatory T-cells (Tregs). Interacts with LRRC33/NRROS; leading to regulation of TGF-beta-1 activation in macrophages and microglia. Interacts (via cell attachment site) with integrins ITGAV and ITGB6 (ITGAV:ITGB6), leading to release of the active TGF-beta-1. Interacts with NREP; the interaction results in a decrease in TGFB1 autoinduction. Interacts with HSP90AB1; inhibits latent TGFB1 activation. Homodimer; disulfide-linked. Interacts with TGF-beta receptors (TGFBR1 and TGFBR2), leading to signal transduction. In terms of processing, transforming growth factor beta-1 proprotein: The precursor proprotein is cleaved in the Golgi apparatus by FURIN to form Transforming growth factor beta-1 (TGF-beta-1) and Latency-associated peptide (LAP) chains, which remain non-covalently linked, rendering TGF-beta-1 inactive. Post-translationally, N-glycosylated. Deglycosylation leads to activation of Transforming growth factor beta-1 (TGF-beta-1); mechanisms triggering deglycosylation-driven activation of TGF-beta-1 are however unclear. As to expression, abundant in the bone matrix. Expressed in cardiomyocytes.

The protein resides in the secreted. The protein localises to the extracellular space. Its subcellular location is the extracellular matrix. Functionally, transforming growth factor beta-1 proprotein: Precursor of the Latency-associated peptide (LAP) and Transforming growth factor beta-1 (TGF-beta-1) chains, which constitute the regulatory and active subunit of TGF-beta-1, respectively. Its function is as follows. Required to maintain the Transforming growth factor beta-1 (TGF-beta-1) chain in a latent state during storage in extracellular matrix. Associates non-covalently with TGF-beta-1 and regulates its activation via interaction with 'milieu molecules', such as LTBP1, LRRC32/GARP and LRRC33/NRROS, that control activation of TGF-beta-1. Interaction with LRRC33/NRROS regulates activation of TGF-beta-1 in macrophages and microglia. Interaction with LRRC32/GARP controls activation of TGF-beta-1 on the surface of activated regulatory T-cells (Tregs). Interaction with integrins (ITGAV:ITGB6 or ITGAV:ITGB8) results in distortion of the Latency-associated peptide chain and subsequent release of the active TGF-beta-1. Multifunctional protein that regulates the growth and differentiation of various cell types and is involved in various processes, such as normal development, immune function, microglia function and responses to neurodegeneration. Activation into mature form follows different steps: following cleavage of the proprotein in the Golgi apparatus, Latency-associated peptide (LAP) and Transforming growth factor beta-1 (TGF-beta-1) chains remain non-covalently linked rendering TGF-beta-1 inactive during storage in extracellular matrix. At the same time, LAP chain interacts with 'milieu molecules', such as LTBP1, LRRC32/GARP and LRRC33/NRROS that control activation of TGF-beta-1 and maintain it in a latent state during storage in extracellular milieus. TGF-beta-1 is released from LAP by integrins (ITGAV:ITGB6 or ITGAV:ITGB8): integrin-binding to LAP stabilizes an alternative conformation of the LAP bowtie tail and results in distortion of the LAP chain and subsequent release of the active TGF-beta-1. Once activated following release of LAP, TGF-beta-1 acts by binding to TGF-beta receptors (TGFBR1 and TGFBR2), which transduce signal. While expressed by many cells types, TGF-beta-1 only has a very localized range of action within cell environment thanks to fine regulation of its activation by Latency-associated peptide chain (LAP) and 'milieu molecules'. Plays an important role in bone remodeling: acts as a potent stimulator of osteoblastic bone formation, causing chemotaxis, proliferation and differentiation in committed osteoblasts. Can promote either T-helper 17 cells (Th17) or regulatory T-cells (Treg) lineage differentiation in a concentration-dependent manner. At high concentrations, leads to FOXP3-mediated suppression of RORC and down-regulation of IL-17 expression, favoring Treg cell development. At low concentrations in concert with IL-6 and IL-21, leads to expression of the IL-17 and IL-23 receptors, favoring differentiation to Th17 cells. Stimulates sustained production of collagen through the activation of CREB3L1 by regulated intramembrane proteolysis (RIP). Mediates SMAD2/3 activation by inducing its phosphorylation and subsequent translocation to the nucleus. Positively regulates odontoblastic differentiation in dental papilla cells, via promotion of IPO7-mediated translocation of phosphorylated SMAD2 to the nucleus and subsequent transcription of target genes. Can induce epithelial-to-mesenchymal transition (EMT) and cell migration in various cell types. The polypeptide is Transforming growth factor beta-1 proprotein (Tgfb1) (Rattus norvegicus (Rat)).